The primary structure comprises 473 residues: Photosystem II CP43 reaction center protein (473 aa).

A propeptide spanning residues 1–14 (MKTLYSLRRFYPVE) is cleaved from the precursor. Position 15 is an N-acetylthreonine (Thr15). At Thr15 the chain carries Phosphothreonine. 5 helical membrane-spanning segments follow: residues 69–93 (LFEV…PHLA), 134–155 (LIGP…KDRS), 178–200 (KALY…RKIT), 255–275 (KPFA…LSYS), and 291–312 (WFNN…ASQA). Residue Glu367 participates in [CaMn4O5] cluster binding. The helical transmembrane segment at 447–471 (RARAAAAGFEKGIDRDFEPVLSMNP) threads the bilayer.

This sequence belongs to the PsbB/PsbC family. PsbC subfamily. As to quaternary structure, PSII is composed of 1 copy each of membrane proteins PsbA, PsbB, PsbC, PsbD, PsbE, PsbF, PsbH, PsbI, PsbJ, PsbK, PsbL, PsbM, PsbT, PsbX, PsbY, PsbZ, Psb30/Ycf12, at least 3 peripheral proteins of the oxygen-evolving complex and a large number of cofactors. It forms dimeric complexes. The cofactor is Binds multiple chlorophylls and provides some of the ligands for the Ca-4Mn-5O cluster of the oxygen-evolving complex. It may also provide a ligand for a Cl- that is required for oxygen evolution. PSII binds additional chlorophylls, carotenoids and specific lipids..

It localises to the plastid. It is found in the chloroplast thylakoid membrane. Its function is as follows. One of the components of the core complex of photosystem II (PSII). It binds chlorophyll and helps catalyze the primary light-induced photochemical processes of PSII. PSII is a light-driven water:plastoquinone oxidoreductase, using light energy to abstract electrons from H(2)O, generating O(2) and a proton gradient subsequently used for ATP formation. The protein is Photosystem II CP43 reaction center protein of Cycas taitungensis (Prince sago).